We begin with the raw amino-acid sequence, 143 residues long: Putative pre-16S rRNA nuclease (143 aa).

The protein belongs to the YqgF nuclease family.

It localises to the cytoplasm. Functionally, could be a nuclease involved in processing of the 5'-end of pre-16S rRNA. The sequence is that of Putative pre-16S rRNA nuclease from Salinibacter ruber (strain DSM 13855 / M31).